Here is a 245-residue protein sequence, read N- to C-terminus: Homeobox protein Hox-A4a (245 aa).

The interval 34–99 (DYYERPKDPG…HGPRLTTESC (66 aa)) is disordered. Residues 35-51 (YYERPKDPGFPHHEEAS) are compositionally biased toward basic and acidic residues. 2 stretches are compositionally biased toward polar residues: residues 53 to 73 (PRSNYQEQSYDYGNVSTNDLN) and 82 to 99 (QPQSVSQNHGPRLTTESC). The short motif at 126-131 (VYPWMK) is the Antp-type hexapeptide element. Residues 147-206 (PKRSRTAYTRQQALELEKEFHFNRYLTRRRRVEIAHTMCLSERQVKIWFQNRRMKWKKDH) constitute a DNA-binding region (homeobox). The disordered stretch occupies residues 205 to 245 (DHKLPNTKIRSSSSAPSNHHVKTDATQQQQTLLPTPCSSNL). Over residues 212 to 221 (KIRSSSSAPS) the composition is skewed to polar residues. Residues 230 to 245 (TQQQQTLLPTPCSSNL) show a composition bias toward low complexity.

It belongs to the Antp homeobox family. Deformed subfamily.

The protein localises to the nucleus. Functionally, sequence-specific transcription factor which is part of a developmental regulatory system that provides cells with specific positional identities on the anterior-posterior axis. The polypeptide is Homeobox protein Hox-A4a (hoxa4a) (Danio rerio (Zebrafish)).